Here is a 467-residue protein sequence, read N- to C-terminus: ATP synthase subunit beta (467 aa).

156–163 provides a ligand contact to ATP; the sequence is GGAGVGKT.

It belongs to the ATPase alpha/beta chains family. F-type ATPases have 2 components, CF(1) - the catalytic core - and CF(0) - the membrane proton channel. CF(1) has five subunits: alpha(3), beta(3), gamma(1), delta(1), epsilon(1). CF(0) has three main subunits: a(1), b(2) and c(9-12). The alpha and beta chains form an alternating ring which encloses part of the gamma chain. CF(1) is attached to CF(0) by a central stalk formed by the gamma and epsilon chains, while a peripheral stalk is formed by the delta and b chains.

Its subcellular location is the cell inner membrane. The enzyme catalyses ATP + H2O + 4 H(+)(in) = ADP + phosphate + 5 H(+)(out). Its function is as follows. Produces ATP from ADP in the presence of a proton gradient across the membrane. The catalytic sites are hosted primarily by the beta subunits. This is ATP synthase subunit beta from Cupriavidus metallidurans (strain ATCC 43123 / DSM 2839 / NBRC 102507 / CH34) (Ralstonia metallidurans).